Reading from the N-terminus, the 173-residue chain is Calcineurin subunit B (173 aa).

EF-hand domains follow at residues 20–55, 59–87, 89–124, and 130–165; these read DEIDRLRKRFMKLDTDASGILETNEFLSLPGVAANP, RLMDVFDENHSGDVDFQEFINGLSTFSTK, NKKEKLRFAFKVYDIDRDGYISNGELFIVLKMMVGN, and QLQQIVDKTIMEADKDGDGKISFEEFEAQVGGTNVY. Positions 33, 35, 37, 44, 65, 67, 69, 71, 76, 102, 104, 106, 108, 113, 143, 145, 147, 149, and 154 each coordinate Ca(2+).

The protein belongs to the calcineurin regulatory subunit family. In terms of assembly, composed of a catalytic subunit (A) and a regulatory subunit (B).

In terms of biological role, regulatory subunit of calcineurin, a calcium-dependent, calmodulin stimulated protein phosphatase. Confers calcium sensitivity. The polypeptide is Calcineurin subunit B (CNB1) (Yarrowia lipolytica (strain CLIB 122 / E 150) (Yeast)).